Consider the following 170-residue polypeptide: Large ribosomal subunit protein uL11 (170 aa).

It belongs to the universal ribosomal protein uL11 family. In terms of assembly, part of the ribosomal stalk of the 50S ribosomal subunit. Interacts with L10 and the large rRNA to form the base of the stalk. L10 forms an elongated spine to which L12 dimers bind in a sequential fashion forming a multimeric L10(L12)X complex.

Functionally, forms part of the ribosomal stalk which helps the ribosome interact with GTP-bound translation factors. This chain is Large ribosomal subunit protein uL11, found in Desulfurococcus amylolyticus (strain DSM 18924 / JCM 16383 / VKM B-2413 / 1221n) (Desulfurococcus kamchatkensis).